The primary structure comprises 157 residues: 2-C-methyl-D-erythritol 2,4-cyclodiphosphate synthase (157 aa).

Positions 8 and 10 each coordinate a divalent metal cation. Residues 8-10 and 34-35 contribute to the 4-CDP-2-C-methyl-D-erythritol 2-phosphate site; these read DVH and HS. His42 is a binding site for a divalent metal cation. 4-CDP-2-C-methyl-D-erythritol 2-phosphate contacts are provided by residues 56 to 58, 132 to 135, and Arg142; these read DIG and TTNE.

The protein belongs to the IspF family. In terms of assembly, homotrimer. A divalent metal cation serves as cofactor.

The enzyme catalyses 4-CDP-2-C-methyl-D-erythritol 2-phosphate = 2-C-methyl-D-erythritol 2,4-cyclic diphosphate + CMP. It participates in isoprenoid biosynthesis; isopentenyl diphosphate biosynthesis via DXP pathway; isopentenyl diphosphate from 1-deoxy-D-xylulose 5-phosphate: step 4/6. Functionally, involved in the biosynthesis of isopentenyl diphosphate (IPP) and dimethylallyl diphosphate (DMAPP), two major building blocks of isoprenoid compounds. Catalyzes the conversion of 4-diphosphocytidyl-2-C-methyl-D-erythritol 2-phosphate (CDP-ME2P) to 2-C-methyl-D-erythritol 2,4-cyclodiphosphate (ME-CPP) with a corresponding release of cytidine 5-monophosphate (CMP). In Pelodictyon phaeoclathratiforme (strain DSM 5477 / BU-1), this protein is 2-C-methyl-D-erythritol 2,4-cyclodiphosphate synthase.